A 125-amino-acid polypeptide reads, in one-letter code: Ribonuclease P protein component (125 aa).

It belongs to the RnpA family. In terms of assembly, consists of a catalytic RNA component (M1 or rnpB) and a protein subunit.

It catalyses the reaction Endonucleolytic cleavage of RNA, removing 5'-extranucleotides from tRNA precursor.. Its function is as follows. RNaseP catalyzes the removal of the 5'-leader sequence from pre-tRNA to produce the mature 5'-terminus. It can also cleave other RNA substrates such as 4.5S RNA. The protein component plays an auxiliary but essential role in vivo by binding to the 5'-leader sequence and broadening the substrate specificity of the ribozyme. The sequence is that of Ribonuclease P protein component from Oleidesulfovibrio alaskensis (strain ATCC BAA-1058 / DSM 17464 / G20) (Desulfovibrio alaskensis).